The primary structure comprises 404 residues: Dihydrolipoyllysine-residue acetyltransferase component of pyruvate dehydrogenase complex (404 aa).

The region spanning 2-78 is the Lipoyl-binding domain; the sequence is PIKILMPALS…PVNSLIAVLS (77 aa). Residue Lys-43 is modified to N6-lipoyllysine. One can recognise a Peripheral subunit-binding (PSBD) domain in the interval 128-165; it reads FASPLAKRLAKIRNIRLESVQGSGPHGRIVKQDILSYS. Residue His-377 is part of the active site.

Belongs to the 2-oxoacid dehydrogenase family. In terms of assembly, forms a 24-polypeptide structural core with octahedral symmetry. Requires (R)-lipoate as cofactor.

The enzyme catalyses N(6)-[(R)-dihydrolipoyl]-L-lysyl-[protein] + acetyl-CoA = N(6)-[(R)-S(8)-acetyldihydrolipoyl]-L-lysyl-[protein] + CoA. Functionally, the pyruvate dehydrogenase complex catalyzes the overall conversion of pyruvate to acetyl-CoA and CO(2). It contains multiple copies of three enzymatic components: pyruvate dehydrogenase (E1), dihydrolipoamide acetyltransferase (E2) and lipoamide dehydrogenase (E3). This chain is Dihydrolipoyllysine-residue acetyltransferase component of pyruvate dehydrogenase complex (pdhC), found in Rickettsia typhi (strain ATCC VR-144 / Wilmington).